Reading from the N-terminus, the 476-residue chain is Eukaryotic translation initiation factor 3 subunit L (476 aa).

The 196-residue stretch at 257 to 452 folds into the PCI domain; sequence DAIRMFSHIL…DLDYALENDL (196 aa).

It belongs to the eIF-3 subunit L family. As to quaternary structure, component of the eukaryotic translation initiation factor 3 (eIF-3) complex.

The protein localises to the cytoplasm. In terms of biological role, component of the eukaryotic translation initiation factor 3 (eIF-3) complex, which is involved in protein synthesis of a specialized repertoire of mRNAs and, together with other initiation factors, stimulates binding of mRNA and methionyl-tRNAi to the 40S ribosome. The eIF-3 complex specifically targets and initiates translation of a subset of mRNAs involved in cell proliferation. This Aspergillus clavatus (strain ATCC 1007 / CBS 513.65 / DSM 816 / NCTC 3887 / NRRL 1 / QM 1276 / 107) protein is Eukaryotic translation initiation factor 3 subunit L.